Here is a 344-residue protein sequence, read N- to C-terminus: Phenylalanine--tRNA ligase alpha subunit (344 aa).

Position 256 (glutamate 256) interacts with Mg(2+).

Belongs to the class-II aminoacyl-tRNA synthetase family. Phe-tRNA synthetase alpha subunit type 1 subfamily. As to quaternary structure, tetramer of two alpha and two beta subunits. It depends on Mg(2+) as a cofactor.

The protein localises to the cytoplasm. It carries out the reaction tRNA(Phe) + L-phenylalanine + ATP = L-phenylalanyl-tRNA(Phe) + AMP + diphosphate + H(+). The polypeptide is Phenylalanine--tRNA ligase alpha subunit (Bacillus cytotoxicus (strain DSM 22905 / CIP 110041 / 391-98 / NVH 391-98)).